The chain runs to 203 residues: Small ribosomal subunit protein uS5 (203 aa).

The region spanning 51–114 (LEDEVLDITM…ENAKLNVVRI (64 aa)) is the S5 DRBM domain.

This sequence belongs to the universal ribosomal protein uS5 family. In terms of assembly, part of the 30S ribosomal subunit. Contacts protein S4.

In terms of biological role, with S4 and S12 plays an important role in translational accuracy. The chain is Small ribosomal subunit protein uS5 from Methanothrix thermoacetophila (strain DSM 6194 / JCM 14653 / NBRC 101360 / PT) (Methanosaeta thermophila).